The following is a 144-amino-acid chain: Large ribosomal subunit protein uL15 (144 aa).

The interval Met-1 to Gln-58 is disordered. Residues Arg-21–Gly-31 show a composition bias toward gly residues.

It belongs to the universal ribosomal protein uL15 family. Part of the 50S ribosomal subunit.

In terms of biological role, binds to the 23S rRNA. The chain is Large ribosomal subunit protein uL15 from Chromohalobacter salexigens (strain ATCC BAA-138 / DSM 3043 / CIP 106854 / NCIMB 13768 / 1H11).